We begin with the raw amino-acid sequence, 242 residues long: 1-(5-phosphoribosyl)-5-[(5-phosphoribosylamino)methylideneamino] imidazole-4-carboxamide isomerase (242 aa).

The active-site Proton acceptor is the Asp8. The active-site Proton donor is the Asp130.

Belongs to the HisA/HisF family.

It is found in the cytoplasm. The enzyme catalyses 1-(5-phospho-beta-D-ribosyl)-5-[(5-phospho-beta-D-ribosylamino)methylideneamino]imidazole-4-carboxamide = 5-[(5-phospho-1-deoxy-D-ribulos-1-ylimino)methylamino]-1-(5-phospho-beta-D-ribosyl)imidazole-4-carboxamide. Its pathway is amino-acid biosynthesis; L-histidine biosynthesis; L-histidine from 5-phospho-alpha-D-ribose 1-diphosphate: step 4/9. The chain is 1-(5-phosphoribosyl)-5-[(5-phosphoribosylamino)methylideneamino] imidazole-4-carboxamide isomerase from Acidithiobacillus ferrooxidans (strain ATCC 53993 / BNL-5-31) (Leptospirillum ferrooxidans (ATCC 53993)).